The primary structure comprises 339 residues: Anthranilate phosphoribosyltransferase (339 aa).

Residues Gly-81, 84-85, 91-94, 109-117, and Ser-121 each bind 5-phospho-alpha-D-ribose 1-diphosphate; these read GD, NIST, and KHGNRAASS. Residue Gly-81 participates in anthranilate binding. Ser-93 is a Mg(2+) binding site. Residue Asn-112 coordinates anthranilate. Residue Arg-167 coordinates anthranilate. Asp-226 and Glu-227 together coordinate Mg(2+).

This sequence belongs to the anthranilate phosphoribosyltransferase family. In terms of assembly, homodimer. Mg(2+) is required as a cofactor.

It carries out the reaction N-(5-phospho-beta-D-ribosyl)anthranilate + diphosphate = 5-phospho-alpha-D-ribose 1-diphosphate + anthranilate. It functions in the pathway amino-acid biosynthesis; L-tryptophan biosynthesis; L-tryptophan from chorismate: step 2/5. Its function is as follows. Catalyzes the transfer of the phosphoribosyl group of 5-phosphorylribose-1-pyrophosphate (PRPP) to anthranilate to yield N-(5'-phosphoribosyl)-anthranilate (PRA). The chain is Anthranilate phosphoribosyltransferase from Maricaulis maris (strain MCS10) (Caulobacter maris).